The following is a 383-amino-acid chain: S-adenosylmethionine synthase (383 aa).

His-15 is an ATP binding site. Asp-17 serves as a coordination point for Mg(2+). Glu-43 contacts K(+). Glu-56 and Gln-99 together coordinate L-methionine. The interval 99-109 is flexible loop; the sequence is QSPDINQGVDK. ATP contacts are provided by residues 164–166, 230–231, Asp-239, 245–246, Ala-262, and Lys-266; these read DAK, RF, and RK. Asp-239 contributes to the L-methionine binding site. Residue Lys-270 coordinates L-methionine.

This sequence belongs to the AdoMet synthase family. In terms of assembly, homotetramer; dimer of dimers. Mg(2+) serves as cofactor. The cofactor is K(+).

The protein resides in the cytoplasm. The catalysed reaction is L-methionine + ATP + H2O = S-adenosyl-L-methionine + phosphate + diphosphate. Its pathway is amino-acid biosynthesis; S-adenosyl-L-methionine biosynthesis; S-adenosyl-L-methionine from L-methionine: step 1/1. Its function is as follows. Catalyzes the formation of S-adenosylmethionine (AdoMet) from methionine and ATP. The overall synthetic reaction is composed of two sequential steps, AdoMet formation and the subsequent tripolyphosphate hydrolysis which occurs prior to release of AdoMet from the enzyme. The sequence is that of S-adenosylmethionine synthase from Vibrio atlanticus (strain LGP32) (Vibrio splendidus (strain Mel32)).